Reading from the N-terminus, the 464-residue chain is Cell division protein FtsA (464 aa).

The tract at residues 392–464 (EVIESDKDSE…FKKLMKSLFE (73 aa)) is disordered. Basic and acidic residues predominate over residues 416-455 (KKENDEVAPEAPREESYEDRENHLEDEQQTEGKAKEESKF).

The protein belongs to the FtsA/MreB family. Self-interacts. Interacts with FtsZ.

The protein resides in the cell membrane. Functionally, cell division protein that is involved in the assembly of the Z ring. May serve as a membrane anchor for the Z ring. This Staphylococcus epidermidis (strain ATCC 35984 / DSM 28319 / BCRC 17069 / CCUG 31568 / BM 3577 / RP62A) protein is Cell division protein FtsA.